A 34-amino-acid chain; its full sequence is Cytochrome c oxidase subunit 6B (34 aa).

Belongs to the cytochrome c oxidase subunit 6B family. Component of the cytochrome c oxidase (complex IV, CIV), a multisubunit enzyme composed of 14 subunits. The complex is composed of a catalytic core of 3 subunits MT-CO1, MT-CO2 and MT-CO3, encoded in the mitochondrial DNA, and 11 supernumerary subunits COX4I, COX5A, COX5B, COX6A, COX6B, COX6C, COX7A, COX7B, COX7C, COX8 and NDUFA4, which are encoded in the nuclear genome. The complex exists as a monomer or a dimer and forms supercomplexes (SCs) in the inner mitochondrial membrane with NADH-ubiquinone oxidoreductase (complex I, CI) and ubiquinol-cytochrome c oxidoreductase (cytochrome b-c1 complex, complex III, CIII), resulting in different assemblies (supercomplex SCI(1)III(2)IV(1) and megacomplex MCI(2)III(2)IV(2)). In terms of processing, the N-terminus is blocked.

The protein localises to the mitochondrion inner membrane. It participates in energy metabolism; oxidative phosphorylation. In terms of biological role, component of the cytochrome c oxidase, the last enzyme in the mitochondrial electron transport chain which drives oxidative phosphorylation. The respiratory chain contains 3 multisubunit complexes succinate dehydrogenase (complex II, CII), ubiquinol-cytochrome c oxidoreductase (cytochrome b-c1 complex, complex III, CIII) and cytochrome c oxidase (complex IV, CIV), that cooperate to transfer electrons derived from NADH and succinate to molecular oxygen, creating an electrochemical gradient over the inner membrane that drives transmembrane transport and the ATP synthase. Cytochrome c oxidase is the component of the respiratory chain that catalyzes the reduction of oxygen to water. Electrons originating from reduced cytochrome c in the intermembrane space (IMS) are transferred via the dinuclear copper A center (CU(A)) of subunit 2 and heme A of subunit 1 to the active site in subunit 1, a binuclear center (BNC) formed by heme A3 and copper B (CU(B)). The BNC reduces molecular oxygen to 2 water molecules using 4 electrons from cytochrome c in the IMS and 4 protons from the mitochondrial matrix. The chain is Cytochrome c oxidase subunit 6B from Thunnus obesus (Bigeye tuna).